Here is a 178-residue protein sequence, read N- to C-terminus: Small ribosomal subunit protein uS4 (178 aa).

The S4 RNA-binding domain occupies 104 to 166 (RRLQTIVYRK…PNSPMASENH (63 aa)). The disordered stretch occupies residues 158-178 (NSPMASENHPERTAAVSEENQ).

It belongs to the universal ribosomal protein uS4 family. As to quaternary structure, part of the 30S ribosomal subunit. Contacts protein S5. The interaction surface between S4 and S5 is involved in control of translational fidelity.

Functionally, one of the primary rRNA binding proteins, it binds directly to 16S rRNA where it nucleates assembly of the body of the 30S subunit. Its function is as follows. With S5 and S12 plays an important role in translational accuracy. The chain is Small ribosomal subunit protein uS4 from Methanococcus maripaludis (strain C6 / ATCC BAA-1332).